A 420-amino-acid polypeptide reads, in one-letter code: Tyrosine--tRNA ligase (420 aa).

Position 38 (tyrosine 38) interacts with L-tyrosine. The 'HIGH' region signature appears at proline 43–histidine 52. L-tyrosine is bound by residues tyrosine 169 and glutamine 173. The 'KMSKS' region motif lies at lysine 231 to serine 235. Lysine 234 is an ATP binding site. Residues lysine 353–isoleucine 419 form the S4 RNA-binding domain.

Belongs to the class-I aminoacyl-tRNA synthetase family. TyrS type 1 subfamily. Homodimer.

The protein resides in the cytoplasm. The enzyme catalyses tRNA(Tyr) + L-tyrosine + ATP = L-tyrosyl-tRNA(Tyr) + AMP + diphosphate + H(+). Its function is as follows. Catalyzes the attachment of tyrosine to tRNA(Tyr) in a two-step reaction: tyrosine is first activated by ATP to form Tyr-AMP and then transferred to the acceptor end of tRNA(Tyr). This is Tyrosine--tRNA ligase from Lactobacillus johnsonii (strain CNCM I-12250 / La1 / NCC 533).